Here is a 208-residue protein sequence, read N- to C-terminus: MSQAVGNVASIRRKLVIVGDGACGKTCLLIVFAKGKFPQVYVPTVFDNYVADVEVDGRRVELALWDTAGQEDYDRLRPLSYPDSNVVLICYSIDLPDSLENVMEKWISEVLHFCQGVPIILVGCKADLRNDPQVVEELRAQGLQPVSQAQAQEVADQIGAVDYIECSAKTGYGVREVFEAATRASLVGKQGKSKPKTKSSKKKKCVVL.

19–26 contacts GTP; that stretch reads GDGACGKT. Positions 41–49 match the Effector region motif; that stretch reads YVPTVFDNY. GTP-binding positions include 66–70 and 124–127; these read DTAGQ and CKAD. The disordered stretch occupies residues 188-208; that stretch reads GKQGKSKPKTKSSKKKKCVVL. Positions 191–208 are enriched in basic residues; the sequence is GKSKPKTKSSKKKKCVVL. A Cysteine methyl ester modification is found at Cys-205. Residue Cys-205 is the site of S-geranylgeranyl cysteine attachment. A propeptide spans 206 to 208 (removed in mature form); that stretch reads VVL.

The protein belongs to the small GTPase superfamily. Rho family.

Its subcellular location is the cell membrane. The sequence is that of GTP-binding protein Rho1 (RHO1) from Kluyveromyces lactis (strain ATCC 8585 / CBS 2359 / DSM 70799 / NBRC 1267 / NRRL Y-1140 / WM37) (Yeast).